The sequence spans 478 residues: MSVTKSARSPQVATPLNLDLPESAKKLQSQDPSPANGSSSESSKKTKGITGFQTLVHLVKGNMGTGILGLPLAVKNAGILMGPLSLLVMGLIACHCMHILVRCAQRFCHRLNKPFMDYGDTVMHGLAFSPNAWLQNHAHWGRRVVSFFLIVTQLGFCCVYIVFLADNLKQVVEAVNSTTISCHKNETVVLTPTMDSRLYMLSFLPVLGLLVFVRNLRVLTIFSLLANISMLVSLVIIAQYIIQEIPDASQLPLVASWKTYPLFFGTAIFSFESIGVVLPLENKMKDARGFPTILSLGMSIITTLYIAIGALGYLRFGDDIKASITLNLPNCWLYQSVKLLYVVGILCTYALQFYVPAEIIIPLAVSQVSKRWALPVDLSIRLALVCLTCMLAILIPRLDLVLSLVGSVSSSALALIIPPLLEVVTYYGEGISPLTVTKDALISILGFMGFVVGTYQALDELIKSGNSPALSNSTMFIQ.

2 stretches are compositionally biased toward polar residues: residues 1-14 and 26-37; these read MSVT…QVAT and KLQSQDPSPANG. The disordered stretch occupies residues 1 to 46; that stretch reads MSVTKSARSPQVATPLNLDLPESAKKLQSQDPSPANGSSSESSKKT. Residues 1-53 lie on the Cytoplasmic side of the membrane; that stretch reads MSVTKSARSPQVATPLNLDLPESAKKLQSQDPSPANGSSSESSKKTKGITGFQ. A helical membrane pass occupies residues 54–74; it reads TLVHLVKGNMGTGILGLPLAV. Topologically, residues 75-76 are extracellular; that stretch reads KN. The helical transmembrane segment at 77–97 threads the bilayer; it reads AGILMGPLSLLVMGLIACHCM. At 98–143 the chain is on the cytoplasmic side; that stretch reads HILVRCAQRFCHRLNKPFMDYGDTVMHGLAFSPNAWLQNHAHWGRR. The helical transmembrane segment at 144 to 164 threads the bilayer; sequence VVSFFLIVTQLGFCCVYIVFL. At 165–192 the chain is on the extracellular side; the sequence is ADNLKQVVEAVNSTTISCHKNETVVLTP. The chain crosses the membrane as a helical span at residues 193-213; that stretch reads TMDSRLYMLSFLPVLGLLVFV. Residues 214–217 are Cytoplasmic-facing; the sequence is RNLR. Residues 218 to 238 form a helical membrane-spanning segment; it reads VLTIFSLLANISMLVSLVIIA. At 239-259 the chain is on the extracellular side; it reads QYIIQEIPDASQLPLVASWKT. A helical membrane pass occupies residues 260–280; the sequence is YPLFFGTAIFSFESIGVVLPL. Residues 281–292 lie on the Cytoplasmic side of the membrane; that stretch reads ENKMKDARGFPT. Residues 293 to 313 form a helical membrane-spanning segment; it reads ILSLGMSIITTLYIAIGALGY. Topologically, residues 314–340 are extracellular; it reads LRFGDDIKASITLNLPNCWLYQSVKLL. Residues 341-361 form a helical membrane-spanning segment; the sequence is YVVGILCTYALQFYVPAEIII. At 362 to 374 the chain is on the cytoplasmic side; that stretch reads PLAVSQVSKRWAL. The helical transmembrane segment at 375–395 threads the bilayer; the sequence is PVDLSIRLALVCLTCMLAILI. Residues 396–399 lie on the Extracellular side of the membrane; sequence PRLD. A helical transmembrane segment spans residues 400–420; sequence LVLSLVGSVSSSALALIIPPL. The Cytoplasmic segment spans residues 421–441; sequence LEVVTYYGEGISPLTVTKDAL. The chain crosses the membrane as a helical span at residues 442 to 462; that stretch reads ISILGFMGFVVGTYQALDELI. At 463–478 the chain is on the extracellular side; it reads KSGNSPALSNSTMFIQ.

Belongs to the amino acid/polyamine transporter 2 family. In terms of tissue distribution, expressed in spinal cord, brain, testis, lung, heart, colon, spleen, kidney and muscle. Found in neuronal cell bodies in the anterior horn, in spinal cord brain stem, cerebellum, hippocampus, hypothalamus, rhinencephalon, cerebral cortex, and olfactory bulb in the brain. Also expressed in bone and fat tissues.

The protein resides in the cell membrane. It is found in the endoplasmic reticulum membrane. Its subcellular location is the recycling endosome membrane. The enzyme catalyses glycine(in) + H(+)(in) = glycine(out) + H(+)(out). It carries out the reaction L-alanine(in) + H(+)(in) = L-alanine(out) + H(+)(out). The catalysed reaction is D-alanine(in) + H(+)(in) = D-alanine(out) + H(+)(out). It catalyses the reaction L-proline(out) + H(+)(out) = L-proline(in) + H(+)(in). The enzyme catalyses D-proline(out) + H(+)(out) = D-proline(in) + H(+)(in). It carries out the reaction 4-hydroxy-L-proline(in) + H(+)(in) = 4-hydroxy-L-proline(out) + H(+)(out). The catalysed reaction is L-serine(in) + H(+)(in) = L-serine(out) + H(+)(out). It catalyses the reaction D-serine(out) + H(+)(out) = D-serine(in) + H(+)(in). The enzyme catalyses beta-alanine(in) + H(+)(in) = beta-alanine(out) + H(+)(out). It carries out the reaction 4-aminobutanoate(in) + H(+)(in) = 4-aminobutanoate(out) + H(+)(out). The catalysed reaction is sarcosine(in) + H(+)(in) = sarcosine(out) + H(+)(out). It catalyses the reaction N,N-dimethylglycine(in) + H(+)(in) = N,N-dimethylglycine(out) + H(+)(out). Electrogenic proton/amino acid symporter with a high selectivity for the small side chains amino acids glycine, alanine and proline, where both L- and D-enantiomers are transported. Extension of the backbone length, as in beta-alanine and 4-aminobutanoate or methylation of the amino group, as in sarcosine and N,N-dimethylglycine, are also tolerated but decrease transport efficiency. A free carboxyl group is preferred. This Mus musculus (Mouse) protein is Proton-coupled amino acid transporter 2.